Reading from the N-terminus, the 580-residue chain is MAMLLRARCFHRLAIPDPRRILYKDYRTAIPQNFSNYESMKHDFKIEIPEYFNFAKDVLDQWTNTEKTGKRLSNPAFWWVDGNGKEVRWSFEELGSLSRKFANILTEACSLQRGDRVMVILPKIPEWWLANVACLRTGTVLIPGTTQLTQKDILYRLQSSKSKCIITDDTLAPAVDIVAAKCENLHSKLIVSQHSREGWGNLKEMMKYASDSHTCVDTKHNELMAIYFTSGTTGPPKMIGHTHSSFGLGLSVNGRFWLDLIASDVMWNTSDTGWAKSAWSSVFSPWTQGACVFAHYLPRFDSTSILQTLSKFPITVFCSAPTAYRMLIQNDITSYKFNSLKHCVSAGEPINPEVMEQWKKKTGLDIYEGYGQTETVLICGNFKGMKIKPGSMGKPSPAFNVEILDENGTILPPGQEGDIAVQVLPDRPFGLFTHYVDNPSKTASTLRGNFYITGDRGYMDEDGYFWFVARSDDVILSSGYRIGPFEVESALIEHPSIAESAVVSSPDPIRGEVVKAFIVLNPDYKLHDQEQLKKEIQEHVKKTTAPYKYPRKIEFIEELPKTVSGKVKRNELRRKEWTTT.

A mitochondrion-targeting transit peptide spans 1 to 21; the sequence is MAMLLRARCFHRLAIPDPRRI. Lysine 67 and lysine 100 each carry N6-succinyllysine. Lysine 151 bears the N6-acetyllysine mark. ATP contacts are provided by residues 229–237, 368–373, aspartate 455, arginine 470, and lysine 566; these read TSGTTGPPK and EGYGQT.

The protein belongs to the ATP-dependent AMP-binding enzyme family. Mg(2+) is required as a cofactor. It depends on Mn(2+) as a cofactor.

It is found in the mitochondrion. Its subcellular location is the mitochondrion matrix. It catalyses the reaction a medium-chain fatty acid + ATP + CoA = a medium-chain fatty acyl-CoA + AMP + diphosphate. It carries out the reaction propanoate + ATP + CoA = propanoyl-CoA + AMP + diphosphate. The enzyme catalyses butanoate + ATP + CoA = butanoyl-CoA + AMP + diphosphate. The catalysed reaction is 2-methylpropanoate + ATP + CoA = 2-methylpropanoyl-CoA + AMP + diphosphate. It catalyses the reaction 2-methylbutanoate + ATP + CoA = 2-methylbutanoyl-CoA + AMP + diphosphate. It carries out the reaction octanoate + ATP + CoA = octanoyl-CoA + AMP + diphosphate. In terms of biological role, catalyzes the activation of fatty acids by CoA to produce an acyl-CoA, the first step in fatty acid metabolism. Capable of activating medium-chain fatty acids with a preference for isobutyrate among fatty acids with 2-6 carbon atoms. The protein is Acyl-coenzyme A synthetase ACSM3, mitochondrial (Acsm3) of Rattus norvegicus (Rat).